A 449-amino-acid chain; its full sequence is Xylose isomerase (449 aa).

Catalysis depends on residues histidine 103 and aspartate 106. Mg(2+) contacts are provided by glutamate 234, glutamate 270, histidine 273, aspartate 298, aspartate 309, aspartate 311, and aspartate 342.

Belongs to the xylose isomerase family. In terms of assembly, homotetramer. The cofactor is Mg(2+).

The protein resides in the cytoplasm. It catalyses the reaction alpha-D-xylose = alpha-D-xylulofuranose. In terms of biological role, involved in D-xylose catabolism. The polypeptide is Xylose isomerase (xylA) (Lactiplantibacillus pentosus (Lactobacillus pentosus)).